We begin with the raw amino-acid sequence, 1702 residues long: Immunoglobulin A1 protease autotransporter (1702 aa).

The first 25 residues, M1–A25, serve as a signal peptide directing secretion. A Peptidase S6 domain is found at A26–T332. S288 is a catalytic residue. Residues V991 to R1411 form a disordered region. Polar residues predominate over residues T997 to E1021. Positions T1037–E1047 are enriched in low complexity. A compositionally biased stretch (basic and acidic residues) spans S1049 to Q1061. Residues K1082–S1095 show a composition bias toward polar residues. Composition is skewed to basic and acidic residues over residues E1104 to I1132 and A1150 to E1162. 2 tandem repeats follow at residues A1109–K1116 and A1117–K1124. A 2 X 8 AA tandem repeats of A-K-V-E-K-E-E-K region spans residues A1109–K1124. Composition is skewed to polar residues over residues T1163–S1186 and V1207–Q1218. The segment covering P1219–Q1234 has biased composition (basic and acidic residues). 3 stretches are compositionally biased toward polar residues: residues E1235–P1255, N1263–T1305, and T1316–N1341. Positions E1360 to D1378 are enriched in low complexity. Residues R1382–S1392 are compositionally biased toward basic residues. The Autotransporter domain maps to N1450–F1702.

The protein resides in the periplasm. The protein localises to the secreted. It localises to the cell surface. It is found in the cell outer membrane. It catalyses the reaction Cleavage of immunoglobulin A molecules at certain Pro-|-Xaa bonds in the hinge region. No small molecule substrates are known.. Functionally, virulence factor; cleaves host immunoglobulin A producing intact Fc and Fab fragments. The polypeptide is Immunoglobulin A1 protease autotransporter (iga) (Haemophilus influenzae).